The chain runs to 70 residues: uncharacterized protein (70 aa).

Its subcellular location is the plastid. The protein localises to the chloroplast. This is an uncharacterized protein from Mesostigma viride (Green alga).